A 137-amino-acid polypeptide reads, in one-letter code: Nucleoside diphosphate kinase (137 aa).

Positions 9, 57, 85, 91, and 102 each coordinate ATP. The active-site Pros-phosphohistidine intermediate is the histidine 119.

Belongs to the NDK family. In terms of assembly, homotetramer. It depends on Mg(2+) as a cofactor.

It is found in the cytoplasm. It carries out the reaction a 2'-deoxyribonucleoside 5'-diphosphate + ATP = a 2'-deoxyribonucleoside 5'-triphosphate + ADP. The enzyme catalyses a ribonucleoside 5'-diphosphate + ATP = a ribonucleoside 5'-triphosphate + ADP. In terms of biological role, major role in the synthesis of nucleoside triphosphates other than ATP. The ATP gamma phosphate is transferred to the NDP beta phosphate via a ping-pong mechanism, using a phosphorylated active-site intermediate. The chain is Nucleoside diphosphate kinase from Streptococcus thermophilus (strain CNRZ 1066).